We begin with the raw amino-acid sequence, 345 residues long: Phosphate acyltransferase (345 aa).

The protein belongs to the PlsX family. Homodimer. Probably interacts with PlsY.

The protein resides in the cytoplasm. The enzyme catalyses a fatty acyl-[ACP] + phosphate = an acyl phosphate + holo-[ACP]. Its pathway is lipid metabolism; phospholipid metabolism. In terms of biological role, catalyzes the reversible formation of acyl-phosphate (acyl-PO(4)) from acyl-[acyl-carrier-protein] (acyl-ACP). This enzyme utilizes acyl-ACP as fatty acyl donor, but not acyl-CoA. The sequence is that of Phosphate acyltransferase from Photorhabdus laumondii subsp. laumondii (strain DSM 15139 / CIP 105565 / TT01) (Photorhabdus luminescens subsp. laumondii).